The following is a 426-amino-acid chain: Serine hydroxymethyltransferase (426 aa).

Residues Leu113 and 117-119 each bind (6S)-5,6,7,8-tetrahydrofolate; that span reads GHL. An N6-(pyridoxal phosphate)lysine modification is found at Lys222. Position 363-365 (363-365) interacts with (6S)-5,6,7,8-tetrahydrofolate; that stretch reads SAF.

This sequence belongs to the SHMT family. In terms of assembly, homodimer. It depends on pyridoxal 5'-phosphate as a cofactor.

It is found in the cytoplasm. It carries out the reaction (6R)-5,10-methylene-5,6,7,8-tetrahydrofolate + glycine + H2O = (6S)-5,6,7,8-tetrahydrofolate + L-serine. Its pathway is one-carbon metabolism; tetrahydrofolate interconversion. It participates in amino-acid biosynthesis; glycine biosynthesis; glycine from L-serine: step 1/1. Its function is as follows. Catalyzes the reversible interconversion of serine and glycine with tetrahydrofolate (THF) serving as the one-carbon carrier. This reaction serves as the major source of one-carbon groups required for the biosynthesis of purines, thymidylate, methionine, and other important biomolecules. Also exhibits THF-independent aldolase activity toward beta-hydroxyamino acids, producing glycine and aldehydes, via a retro-aldol mechanism. The polypeptide is Serine hydroxymethyltransferase (Bacteroides thetaiotaomicron (strain ATCC 29148 / DSM 2079 / JCM 5827 / CCUG 10774 / NCTC 10582 / VPI-5482 / E50)).